Consider the following 183-residue polypeptide: uncharacterized protein (183 aa).

Residues 136–183 form a disordered region; that stretch reads EPPASVPSKQSGRSDKKKSTRKSPTFRNRPDFRKNKGRQLNKTTKQKK. The segment covering 170–183 has biased composition (basic residues); sequence NKGRQLNKTTKQKK.

This is an uncharacterized protein from Homo sapiens (Human).